A 507-amino-acid chain; its full sequence is MVTIRPDEISSIIRKQIKQYNQEVEVVNIGIVLQVGDGIARIHGLDEVMAGELVEFEDGTVGIALNLESNNVGAVLMGDGLMIQEGSSVRATGKIAQIPVSDAYSGRVVNALAQPIDGRGKITASESRSIESPAPGIISRRSVYEPLQTGLIAIDSMIPIGRGQRELIIGDRQTGKTAVATDTIINQKGQDVICVYVAIGQKASSVAQVVNIFQERGAMEYTIVVAETADSPATLQYLAPYTGAALAEYFMYKEQHTLIIYDDLSKQARAYRQMSLLLRRPPGREAYPGDVFYLHSRLLERAAKLSSQLGEGSMTALPIVETQAGDVSAYIPTNVISITDGQIFLSADLFNAGIRPAINVGISVSRVGSAAQIKAMKQVAGKLKLELAQFAELEAFAQFASDLDRATQNQLARGQRLRELLKQSQSAPLTVEEQIATIYAGANGYLDILEIVQVRKFLVQLREYLITNKPQFGEIIRSTRAFTEQAEALLKEAIQEHIELFLLREQK.

ATP is bound at residue 170 to 177 (GDRQTGKT).

It belongs to the ATPase alpha/beta chains family. F-type ATPases have 2 components, CF(1) - the catalytic core - and CF(0) - the membrane proton channel. CF(1) has five subunits: alpha(3), beta(3), gamma(1), delta(1), epsilon(1). CF(0) has four main subunits: a, b, b' and c.

Its subcellular location is the plastid. It localises to the chloroplast thylakoid membrane. It carries out the reaction ATP + H2O + 4 H(+)(in) = ADP + phosphate + 5 H(+)(out). Produces ATP from ADP in the presence of a proton gradient across the membrane. The alpha chain is a regulatory subunit. The polypeptide is ATP synthase subunit alpha, chloroplastic (Cycas taitungensis (Prince sago)).